We begin with the raw amino-acid sequence, 348 residues long: 3',5'-cyclic-nucleotide phosphodiesterase (348 aa).

Mn(2+) serves as cofactor.

It catalyses the reaction a nucleoside 3',5'-cyclic phosphate + H2O = a nucleoside 5'-phosphate + H(+). In terms of biological role, hydrolyzes cAMP to 5'-AMP and cGMP to 5'-GMP. Does not show phosphohydrolase activity toward various phosphatidylcholine and phosphorylated sugars. The sequence is that of 3',5'-cyclic-nucleotide phosphodiesterase from Helicobacter pylori (strain ATCC 700392 / 26695) (Campylobacter pylori).